The sequence spans 333 residues: Catabolite control protein A (333 aa).

The HTH lacI-type domain maps to 7–61 (ITIYDVAREAGVSMATVSRVVNGNKNVKENTRKKVLEVIDRLDYRPNAVARGLAS). Residues 9–28 (IYDVAREAGVSMATVSRVVN) constitute a DNA-binding region (H-T-H motif).

Functionally, global transcriptional regulator of carbon catabolite repression (CCR) and carbon catabolite activation (CCA), which ensures optimal energy usage under diverse conditions. The polypeptide is Catabolite control protein A (ccpA) (Streptococcus mutans serotype c (strain ATCC 700610 / UA159)).